We begin with the raw amino-acid sequence, 158 residues long: Transcription elongation factor GreA (158 aa).

It belongs to the GreA/GreB family.

Necessary for efficient RNA polymerase transcription elongation past template-encoded arresting sites. The arresting sites in DNA have the property of trapping a certain fraction of elongating RNA polymerases that pass through, resulting in locked ternary complexes. Cleavage of the nascent transcript by cleavage factors such as GreA or GreB allows the resumption of elongation from the new 3'terminus. GreA releases sequences of 2 to 3 nucleotides. The protein is Transcription elongation factor GreA of Zymomonas mobilis subsp. mobilis (strain ATCC 31821 / ZM4 / CP4).